A 423-amino-acid polypeptide reads, in one-letter code: 4-hydroxy-3-methylbut-2-en-1-yl diphosphate synthase (flavodoxin) (423 aa).

Positions 307, 310, 353, and 360 each coordinate [4Fe-4S] cluster.

The protein belongs to the IspG family. Requires [4Fe-4S] cluster as cofactor.

It catalyses the reaction (2E)-4-hydroxy-3-methylbut-2-enyl diphosphate + oxidized [flavodoxin] + H2O + 2 H(+) = 2-C-methyl-D-erythritol 2,4-cyclic diphosphate + reduced [flavodoxin]. It participates in isoprenoid biosynthesis; isopentenyl diphosphate biosynthesis via DXP pathway; isopentenyl diphosphate from 1-deoxy-D-xylulose 5-phosphate: step 5/6. Converts 2C-methyl-D-erythritol 2,4-cyclodiphosphate (ME-2,4cPP) into 1-hydroxy-2-methyl-2-(E)-butenyl 4-diphosphate. The protein is 4-hydroxy-3-methylbut-2-en-1-yl diphosphate synthase (flavodoxin) of Brucella anthropi (strain ATCC 49188 / DSM 6882 / CCUG 24695 / JCM 21032 / LMG 3331 / NBRC 15819 / NCTC 12168 / Alc 37) (Ochrobactrum anthropi).